The sequence spans 500 residues: Monocarboxylate transporter 1 (500 aa).

At 1–22 the chain is on the cytoplasmic side; it reads MPPAVGGPVGYTPPDGGWGWAV. Residues 23–44 form a helical membrane-spanning segment; it reads VIGAFISIGFSYAFPKSITVFF. Residue Lys38 participates in (S)-lactate binding. Topologically, residues 45–55 are extracellular; the sequence is KEIEGIFHATT. Residues 56–80 form a helical membrane-spanning segment; that stretch reads SEVSWISSIMLAVMYGGGPISSILV. The Cytoplasmic segment spans residues 81–84; that stretch reads NKYG. A helical transmembrane segment spans residues 85-105; it reads SRIVMIVGGCLSGCGLIAASF. Residues 106–109 are Extracellular-facing; the sequence is CNTV. Residues 110–132 form a helical membrane-spanning segment; the sequence is QQLYVCIGVIGGLGLAFNLNPAL. The Cytoplasmic portion of the chain corresponds to 133–146; it reads TMIGKYFYKRRPLA. The helical transmembrane segment at 147–169 threads the bilayer; sequence NGLAMAGSPVFLCTLAPLNQVFF. Residues 170-174 are Extracellular-facing; sequence GIFGW. The helical transmembrane segment at 175 to 194 threads the bilayer; the sequence is RGSFLILGGLLLNCCVAGAL. The Cytoplasmic portion of the chain corresponds to 195–261; that stretch reads MRPIGPKPTK…FLDLTLFTHR (67 aa). Phosphoserine is present on residues Ser210 and Ser213. The residue at position 231 (Thr231) is a Phosphothreonine. Residues 262–288 traverse the membrane as a helical segment; it reads GFLLYLSGNVIMFFGLFAPLVFLSSYG. The Extracellular segment spans residues 289–295; it reads KSQHYSS. The helical transmembrane segment at 296-317 threads the bilayer; that stretch reads EKSAFLLSILAFVDMVARPSMG. Position 309 (Asp309) interacts with H(+). Arg313 is a binding site for (S)-lactate. The Cytoplasmic segment spans residues 318–328; it reads LVANTKPIRPR. Residues 329–349 traverse the membrane as a helical segment; that stretch reads IQYFFAASVVANGVCHMLAPL. The Extracellular portion of the chain corresponds to 350–353; it reads STTY. The helical transmembrane segment at 354–375 threads the bilayer; it reads VGFCVYAGFFGFAFGWLSSVLF. The Cytoplasmic portion of the chain corresponds to 376–389; sequence ETLMDLVGPQRFSS. Residues 390–410 form a helical membrane-spanning segment; it reads AVGLVTIVECCPVLLGPPLLG. Residues 411-421 lie on the Extracellular side of the membrane; it reads RLNDMYGDYKY. The chain crosses the membrane as a helical span at residues 422 to 443; it reads TYWACGVVLIISGIYLFIGMGI. The Cytoplasmic segment spans residues 444–500; sequence NYRLLAKEQKANEQKKESKEEETSIDVAGKPNEVTKAAESPDQKDTDGGPKEEESPV. The segment covering 454–465 has biased composition (basic and acidic residues); it reads ANEQKKESKEEE. The interval 454-500 is disordered; sequence ANEQKKESKEEETSIDVAGKPNEVTKAAESPDQKDTDGGPKEEESPV. Phosphoserine is present on Ser461. A Phosphothreonine modification is found at Thr466. Phosphoserine is present on residues Ser467, Ser483, and Ser498. The segment covering 482–500 has biased composition (basic and acidic residues); sequence ESPDQKDTDGGPKEEESPV.

It belongs to the major facilitator superfamily. Monocarboxylate porter (TC 2.A.1.13) family. As to quaternary structure, interacts with EMB; interaction mediates SLC16A1 targeting to the plasma membrane. Interacts with isoform 2 of BSG; interaction mediates SLC16A1 targeting to the plasma membrane. Widely expressed. Detected in heart and in blood lymphocytes and monocytes (at protein level).

The protein resides in the cell membrane. The protein localises to the basolateral cell membrane. It localises to the apical cell membrane. It carries out the reaction (S)-lactate(in) + H(+)(in) = (S)-lactate(out) + H(+)(out). It catalyses the reaction acetate(out) + H(+)(out) = acetate(in) + H(+)(in). The enzyme catalyses acetoacetate(out) + H(+)(out) = acetoacetate(in) + H(+)(in). The catalysed reaction is pyruvate(out) + H(+)(out) = pyruvate(in) + H(+)(in). It carries out the reaction (R)-3-hydroxybutanoate(out) + H(+)(out) = (R)-3-hydroxybutanoate(in) + H(+)(in). It catalyses the reaction 3-methyl-2-oxobutanoate(out) + H(+)(out) = 3-methyl-2-oxobutanoate(in) + H(+)(in). The enzyme catalyses 4-methyl-2-oxopentanoate(out) + H(+)(out) = 4-methyl-2-oxopentanoate(in) + H(+)(in). The catalysed reaction is succinate(in) + 2 H(+)(in) = succinate(out) + 2 H(+)(out). Its activity is regulated as follows. Selectively inhibited by AZD3965, that acts as a competitive inhibitor binding to the central channel in the outward open conformation. In terms of biological role, bidirectional proton-coupled monocarboxylate transporter. Catalyzes the rapid transport across the plasma membrane of many monocarboxylates such as lactate, pyruvate, acetate and the ketone bodies acetoacetate and beta-hydroxybutyrate, and thus contributes to the maintenance of intracellular pH. The transport direction is determined by the proton motive force and the concentration gradient of the substrate monocarboxylate. MCT1 is a major lactate exporter. Plays a role in cellular responses to a high-fat diet by modulating the cellular levels of lactate and pyruvate that contribute to the regulation of central metabolic pathways and insulin secretion, with concomitant effects on plasma insulin levels and blood glucose homeostasis. Facilitates the protonated monocarboxylate form of succinate export, that its transient protonation upon muscle cell acidification in exercising muscle and ischemic heart. Functions via alternate outward- and inward-open conformation states. Protonation and deprotonation of 309-Asp is essential for the conformational transition. The chain is Monocarboxylate transporter 1 from Homo sapiens (Human).